Here is a 95-residue protein sequence, read N- to C-terminus: MSRSSKKGPYVDIRLLNRIEELNRANEKRVLRTWSRDSTIFPQMVGHTIAVHDGRRHVPVYITENMVGHKLGEFAPTRSFRGHGGKKADKRGKMK.

A disordered region spans residues 75–95 (APTRSFRGHGGKKADKRGKMK). Residues 80–95 (FRGHGGKKADKRGKMK) show a composition bias toward basic residues.

The protein belongs to the universal ribosomal protein uS19 family.

In terms of biological role, protein S19 forms a complex with S13 that binds strongly to the 16S ribosomal RNA. The polypeptide is Small ribosomal subunit protein uS19 (Roseiflexus sp. (strain RS-1)).